The following is a 138-amino-acid chain: Protein X (138 aa).

The disordered stretch occupies residues 24 to 48 (ESGGPAVSRPSAGSASRADSPLPSA). The tract at residues 68-113 (PCCLGFTCAEFGAMVSTMNFVTWHAKRQLGMPTKDLWTPYVRNQLL) is mitochondrial targeting sequence.

This sequence belongs to the orthohepadnavirus protein X family. As to quaternary structure, may form homodimer. May interact with host CEBPA, CFLAR, CREB1, DDB1, E4F1, HBXIP, HSPD1/HSP60, NFKBIA, POLR2E and SMAD4. Interacts with host SMC5-SMC6 complex and induces its degradation. Interacts with host TRPC4AP; leading to prevent ubiquitination of TRPC4AP. Interacts with host PLSCR1; this interaction promotes ubiquitination and degradation of HBx and impairs HBx-mediated cell proliferation. In terms of processing, a fraction may be phosphorylated in insect cells and HepG2 cells, a human hepatoblastoma cell line. Phosphorylated in vitro by host protein kinase C or mitogen-activated protein kinase. N-acetylated in insect cells.

The protein resides in the host cytoplasm. The protein localises to the host nucleus. It is found in the host mitochondrion. Multifunctional protein that plays a role in silencing host antiviral defenses and promoting viral transcription. Does not seem to be essential for HBV infection. May be directly involved in development of cirrhosis and liver cancer (hepatocellular carcinoma). Most of cytosolic activities involve modulation of cytosolic calcium. The effect on apoptosis is controversial depending on the cell types in which the studies have been conducted. May induce apoptosis by localizing in mitochondria and causing loss of mitochondrial membrane potential. May also modulate apoptosis by binding host CFLAR, a key regulator of the death-inducing signaling complex (DISC). Promotes viral transcription by using the host E3 ubiquitin ligase DDB1 to target the SMC5-SMC6 complex to proteasomal degradation. This host complex would otherwise bind to viral episomal DNA, and prevents its transcription. Moderately stimulates transcription of many different viral and cellular transcription elements. Promoters and enhancers stimulated by HBx contain DNA binding sites for NF-kappa-B, AP-1, AP-2, c-EBP, ATF/CREB, or the calcium-activated factor NF-AT. The sequence is that of Protein X from Arctic squirrel hepatitis virus (ASHV).